The primary structure comprises 184 residues: Homeobox protein LOX10 (184 aa).

Disordered stretches follow at residues 1–29 and 129–184; these read KIVS…PLQH and YKTK…NKPG. Positions 76-135 form a DNA-binding region, homeobox; the sequence is RRKRRILFSQAQIYELERRFRQQKYLSAPEREHLATFIGLTPTQVKIWFQNHRYKTKKSK. 2 stretches are compositionally biased toward low complexity: residues 140–161 and 174–184; these read NSPS…ASTT and SNTTNNNNKPG.

Belongs to the NK-2 homeobox family. In terms of tissue distribution, expressed in a segmental pattern in the endoderm and in the cephalic nervous system.

The protein resides in the nucleus. May play a role in patterning the gut. The sequence is that of Homeobox protein LOX10 (LOX10) from Helobdella triserialis (Leech).